We begin with the raw amino-acid sequence, 563 residues long: Arginine--tRNA ligase (563 aa).

Positions 121-131 (PNIAKPFSIGH) match the 'HIGH' region motif.

It belongs to the class-I aminoacyl-tRNA synthetase family. Monomer.

The protein resides in the cytoplasm. It catalyses the reaction tRNA(Arg) + L-arginine + ATP = L-arginyl-tRNA(Arg) + AMP + diphosphate. This Streptococcus thermophilus (strain ATCC BAA-250 / LMG 18311) protein is Arginine--tRNA ligase.